We begin with the raw amino-acid sequence, 255 residues long: Imidazole glycerol phosphate synthase subunit HisF (255 aa).

Residues D12 and D131 contribute to the active site.

Belongs to the HisA/HisF family. Heterodimer of HisH and HisF.

It is found in the cytoplasm. The catalysed reaction is 5-[(5-phospho-1-deoxy-D-ribulos-1-ylimino)methylamino]-1-(5-phospho-beta-D-ribosyl)imidazole-4-carboxamide + L-glutamine = D-erythro-1-(imidazol-4-yl)glycerol 3-phosphate + 5-amino-1-(5-phospho-beta-D-ribosyl)imidazole-4-carboxamide + L-glutamate + H(+). Its pathway is amino-acid biosynthesis; L-histidine biosynthesis; L-histidine from 5-phospho-alpha-D-ribose 1-diphosphate: step 5/9. Its function is as follows. IGPS catalyzes the conversion of PRFAR and glutamine to IGP, AICAR and glutamate. The HisF subunit catalyzes the cyclization activity that produces IGP and AICAR from PRFAR using the ammonia provided by the HisH subunit. This is Imidazole glycerol phosphate synthase subunit HisF from Neisseria meningitidis serogroup C (strain 053442).